A 216-amino-acid polypeptide reads, in one-letter code: Elongation factor Ts (216 aa).

The interval 81–84 (TDFV) is involved in Mg(2+) ion dislocation from EF-Tu.

It belongs to the EF-Ts family.

It localises to the cytoplasm. Functionally, associates with the EF-Tu.GDP complex and induces the exchange of GDP to GTP. It remains bound to the aminoacyl-tRNA.EF-Tu.GTP complex up to the GTP hydrolysis stage on the ribosome. The protein is Elongation factor Ts of Geotalea daltonii (strain DSM 22248 / JCM 15807 / FRC-32) (Geobacter daltonii).